The primary structure comprises 99 residues: DNA-directed RNA polymerase subunit omega (99 aa).

The protein belongs to the RNA polymerase subunit omega family. The RNAP catalytic core consists of 2 alpha, 1 beta, 1 beta' and 1 omega subunit. When a sigma factor is associated with the core the holoenzyme is formed, which can initiate transcription.

It catalyses the reaction RNA(n) + a ribonucleoside 5'-triphosphate = RNA(n+1) + diphosphate. Promotes RNA polymerase assembly. Latches the N- and C-terminal regions of the beta' subunit thereby facilitating its interaction with the beta and alpha subunits. The sequence is that of DNA-directed RNA polymerase subunit omega from Stenotrophomonas maltophilia (strain K279a).